The following is a 313-amino-acid chain: 4-hydroxy-3-methylbut-2-enyl diphosphate reductase (313 aa).

C20 lines the [4Fe-4S] cluster pocket. Positions 49 and 82 each coordinate (2E)-4-hydroxy-3-methylbut-2-enyl diphosphate. Residues H49 and H82 each coordinate dimethylallyl diphosphate. Isopentenyl diphosphate is bound by residues H49 and H82. [4Fe-4S] cluster is bound at residue C104. Residue H132 participates in (2E)-4-hydroxy-3-methylbut-2-enyl diphosphate binding. Position 132 (H132) interacts with dimethylallyl diphosphate. Position 132 (H132) interacts with isopentenyl diphosphate. E134 (proton donor) is an active-site residue. T172 is a (2E)-4-hydroxy-3-methylbut-2-enyl diphosphate binding site. C201 lines the [4Fe-4S] cluster pocket. Residues S229, S230, N231, and S273 each coordinate (2E)-4-hydroxy-3-methylbut-2-enyl diphosphate. Residues S229, S230, N231, and S273 each coordinate dimethylallyl diphosphate. Isopentenyl diphosphate-binding residues include S229, S230, N231, and S273.

It belongs to the IspH family. [4Fe-4S] cluster serves as cofactor.

The catalysed reaction is isopentenyl diphosphate + 2 oxidized [2Fe-2S]-[ferredoxin] + H2O = (2E)-4-hydroxy-3-methylbut-2-enyl diphosphate + 2 reduced [2Fe-2S]-[ferredoxin] + 2 H(+). It catalyses the reaction dimethylallyl diphosphate + 2 oxidized [2Fe-2S]-[ferredoxin] + H2O = (2E)-4-hydroxy-3-methylbut-2-enyl diphosphate + 2 reduced [2Fe-2S]-[ferredoxin] + 2 H(+). It participates in isoprenoid biosynthesis; dimethylallyl diphosphate biosynthesis; dimethylallyl diphosphate from (2E)-4-hydroxy-3-methylbutenyl diphosphate: step 1/1. The protein operates within isoprenoid biosynthesis; isopentenyl diphosphate biosynthesis via DXP pathway; isopentenyl diphosphate from 1-deoxy-D-xylulose 5-phosphate: step 6/6. In terms of biological role, catalyzes the conversion of 1-hydroxy-2-methyl-2-(E)-butenyl 4-diphosphate (HMBPP) into a mixture of isopentenyl diphosphate (IPP) and dimethylallyl diphosphate (DMAPP). Acts in the terminal step of the DOXP/MEP pathway for isoprenoid precursor biosynthesis. This chain is 4-hydroxy-3-methylbut-2-enyl diphosphate reductase, found in Desulfotalea psychrophila (strain LSv54 / DSM 12343).